A 256-amino-acid chain; its full sequence is Phosphonates import ATP-binding protein PhnC (256 aa).

Residues 3–247 (LELKNISKTY…VLHKEIFTNV (245 aa)) form the ABC transporter domain. 36-43 (GLSGAGKS) serves as a coordination point for ATP.

The protein belongs to the ABC transporter superfamily. Phosphonates importer (TC 3.A.1.9.1) family. The complex is composed of two ATP-binding proteins (PhnC), two transmembrane proteins (PhnE) and a solute-binding protein (PhnD).

It localises to the cell inner membrane. The catalysed reaction is phosphonate(out) + ATP + H2O = phosphonate(in) + ADP + phosphate + H(+). Part of the ABC transporter complex PhnCDE involved in phosphonates import. Responsible for energy coupling to the transport system. The chain is Phosphonates import ATP-binding protein PhnC from Treponema denticola (strain ATCC 35405 / DSM 14222 / CIP 103919 / JCM 8153 / KCTC 15104).